The primary structure comprises 283 residues: NADH-ubiquinone oxidoreductase 30.4 kDa subunit, mitochondrial (283 aa).

Residues 1-17 (MASKLCRSRALASALRS) constitute a mitochondrion transit peptide. Residues 258-283 (GAGIDRKPESFKLPTPKPETKPEEKK) are disordered.

This sequence belongs to the complex I 30 kDa subunit family. In terms of assembly, complex I is composed of about 40 different subunits. This is a component of the iron-sulfur protein fraction.

It localises to the mitochondrion inner membrane. The enzyme catalyses a ubiquinone + NADH + 5 H(+)(in) = a ubiquinol + NAD(+) + 4 H(+)(out). Functionally, core subunit of the mitochondrial membrane respiratory chain NADH dehydrogenase (Complex I) that is believed to belong to the minimal assembly required for catalysis. Complex I functions in the transfer of electrons from NADH to the respiratory chain. The immediate electron acceptor for the enzyme is believed to be ubiquinone. The polypeptide is NADH-ubiquinone oxidoreductase 30.4 kDa subunit, mitochondrial (nuo-31) (Neurospora crassa (strain ATCC 24698 / 74-OR23-1A / CBS 708.71 / DSM 1257 / FGSC 987)).